Here is a 154-residue protein sequence, read N- to C-terminus: Protein SprT-like (154 aa).

Residues 6–144 (LQQLTETISL…CGTCHGKLKF (139 aa)) form the SprT-like domain. Residue H67 participates in Zn(2+) binding. E68 is a catalytic residue. H71 is a binding site for Zn(2+).

It belongs to the SprT family. The cofactor is Zn(2+).

The protein localises to the cytoplasm. The chain is Protein SprT-like from Shouchella clausii (strain KSM-K16) (Alkalihalobacillus clausii).